The chain runs to 376 residues: tRNA-specific 2-thiouridylase MnmA (376 aa).

ATP-binding positions include 14 to 21 (GMSGGVDS) and Met-40. An interaction with target base in tRNA region spans residues 100–102 (NPD). Cys-105 acts as the Nucleophile in catalysis. Cys-105 and Cys-202 are oxidised to a cystine. Gly-129 is an ATP binding site. Positions 152–154 (KDQ) are interaction with tRNA. Cys-202 acts as the Cysteine persulfide intermediate in catalysis. Residues 315–316 (RY) are interaction with tRNA.

The protein belongs to the MnmA/TRMU family.

Its subcellular location is the cytoplasm. The catalysed reaction is S-sulfanyl-L-cysteinyl-[protein] + uridine(34) in tRNA + AH2 + ATP = 2-thiouridine(34) in tRNA + L-cysteinyl-[protein] + A + AMP + diphosphate + H(+). Catalyzes the 2-thiolation of uridine at the wobble position (U34) of tRNA, leading to the formation of s(2)U34. The sequence is that of tRNA-specific 2-thiouridylase MnmA from Lactococcus lactis subsp. lactis (strain IL1403) (Streptococcus lactis).